A 181-amino-acid chain; its full sequence is Inner membrane-spanning protein YciB (181 aa).

A run of 5 helical transmembrane segments spans residues 3 to 23, 49 to 69, 76 to 96, 119 to 139, and 149 to 169; these read FLFD…YGIY, TMLW…LILQ, WKPS…QAIF, VNAS…YVAF, and FKLF…GLML.

The protein belongs to the YciB family.

Its subcellular location is the cell inner membrane. Its function is as follows. Plays a role in cell envelope biogenesis, maintenance of cell envelope integrity and membrane homeostasis. This Nitrosospira multiformis (strain ATCC 25196 / NCIMB 11849 / C 71) protein is Inner membrane-spanning protein YciB.